Consider the following 175-residue polypeptide: Protein UPS1, mitochondrial (175 aa).

Residues 1–80 (MVLLHKSTHI…RGITETWIIE (80 aa)) are required for mitochondrial targeting. The PRELI/MSF1 domain maps to 2–172 (VLLHKSTHIF…VIQKLEEARN (171 aa)). A 1,2-diacyl-sn-glycero-3-phosphate contacts are provided by Y26, K58, K148, and N152.

It belongs to the slowmo family. As to quaternary structure, interacts with MDM35. Found associated with a 170 kDa complex.

Its subcellular location is the mitochondrion inner membrane. The protein resides in the mitochondrion intermembrane space. Its function is as follows. Required for maintenance of normal mitochondrial morphology. Required for PCP1-dependent processing of MGM1. The UPS1:MDM35 complex mediates the transfer of phosphatidic acid (PA) between liposomes and probably functions as a PA transporter across the mitochondrion intermembrane space. Phosphatidic acid release requires dissociation of the UPS1:MDM35 complex. Phosphatidic acid import is required for cardiolipin (CL) synthesis in the mitochondrial inner membrane. With UPS2, controls the level of cardiolipin in mitochondria. Cardiolipin is a unique phospholipid with four fatty acid chains and is present mainly in the mitochondrial inner membrane where it stabilizes the electron transport chain supercomplex between complexes III and IV through direct interaction of their subunits. The chain is Protein UPS1, mitochondrial (UPS1) from Saccharomyces cerevisiae (strain ATCC 204508 / S288c) (Baker's yeast).